The chain runs to 380 residues: Reducing-end xylose-releasing exo-oligoxylanase Rex8A (380 aa).

Residue E70 is the Proton donor of the active site. D265 functions as the Proton acceptor in the catalytic mechanism.

This sequence belongs to the glycosyl hydrolase 8 (cellulase D) family.

The enzyme catalyses Hydrolysis of (1-&gt;4)-beta-D-xylose residues from the reducing end of oligosaccharides.. Its pathway is glycan degradation; xylan degradation. Involved in depolymerization of xylan, a major component of the lignocellulosic substrates. Acts as an exo-oligoxylanase that efficiently hydrolyzes xylooligosaccharides, releasing xylose from their reducing ends. Hydrolyzes xylooligomers of 3 to 6 xylose units to xylose and xylobiose. Besides linear xylooligosaccharides, also hydrolyzes branched xylooligomers, such as xylooligomers decorated with 4-O-methyl-D-glucuronic acid moieties. Its proposed role is the degradation of xylooligomers produced by the activity of extracellular xylanases once they have been transported inside cells. Shows minor activity on polymeric xylan (glucuronoxylan from beechwood). Is not active on cellooligosaccharides or cellulosic substrates, or on other polysaccharides such as pectin, polygalacturonic acid, laminarin, or lichenan. The protein is Reducing-end xylose-releasing exo-oligoxylanase Rex8A of Paenibacillus barcinonensis.